The chain runs to 180 residues: DNA-directed RNA polymerase subunit Rpo7 (180 aa).

In terms of domain architecture, S1 motif spans 82–165 (QEVVEGEVLQ…RLPRIALTMR (84 aa)).

Belongs to the eukaryotic RPB7/RPC8 RNA polymerase subunit family. As to quaternary structure, part of the 13-subunit RNA polymerase complex. Forms a stalk with Rpo4 that extends from the main structure.

It localises to the cytoplasm. The enzyme catalyses RNA(n) + a ribonucleoside 5'-triphosphate = RNA(n+1) + diphosphate. DNA-dependent RNA polymerase (RNAP) catalyzes the transcription of DNA into RNA using the four ribonucleoside triphosphates as substrates. The highly mobile Rpo4/Rpo7 heterodimer is conditionally required for transcription initiation. This chain is DNA-directed RNA polymerase subunit Rpo7, found in Saccharolobus shibatae (strain ATCC 51178 / DSM 5389 / JCM 8931 / NBRC 15437 / B12) (Sulfolobus shibatae).